Reading from the N-terminus, the 336-residue chain is Protein REVEILLE 7-like (336 aa).

Residues threonine 60–alanine 114 form the HTH myb-type domain. Positions tryptophan 87–phenylalanine 110 form a DNA-binding region, H-T-H motif. Residues alanine 114 to isoleucine 197 form a disordered region. Positions arginine 134–proline 144 are enriched in basic residues. Positions arginine 145–asparagine 158 are enriched in pro residues. Residues lysine 167–glutamine 189 are compositionally biased toward polar residues.

The protein resides in the nucleus. Its function is as follows. Probable transcription factor. This chain is Protein REVEILLE 7-like (RVE7L), found in Arabidopsis thaliana (Mouse-ear cress).